The sequence spans 261 residues: Sugar fermentation stimulation protein homolog (261 aa).

The disordered stretch occupies residues 1 to 23 (MTDSAKPQNPDPGHESRRVAPLA).

This sequence belongs to the SfsA family.

This is Sugar fermentation stimulation protein homolog from Syntrophobacter fumaroxidans (strain DSM 10017 / MPOB).